A 360-amino-acid polypeptide reads, in one-letter code: Photosystem II protein D1 2 (360 aa).

3 consecutive transmembrane segments (helical) span residues 29-46, 118-133, and 142-156; these read YIGW…SATI, HFLI…EWEF, and WICV…AATA. A chlorophyll a-binding site is contributed by His118. Tyr126 serves as a coordination point for pheophytin a. Asp170 and Glu189 together coordinate [CaMn4O5] cluster. The chain crosses the membrane as a helical span at residues 197-218; it reads LHMFGVAGVFGGSLFAAMHGSL. Position 198 (His198) interacts with chlorophyll a. Residues His215 and 264-265 contribute to the a quinone site; that span reads SF. His215 provides a ligand contact to Fe cation. His272 lines the Fe cation pocket. The chain crosses the membrane as a helical span at residues 274–288; sequence FLAAWPVIGIWLTSL. [CaMn4O5] cluster contacts are provided by His332, Glu333, Asp342, and Ala344. A propeptide spanning residues 345–360 is cleaved from the precursor; it reads GTESAPVAFAAALGDG.

This sequence belongs to the reaction center PufL/M/PsbA/D family. In terms of assembly, PSII is composed of 1 copy each of membrane proteins PsbA, PsbB, PsbC, PsbD, PsbE, PsbF, PsbH, PsbI, PsbJ, PsbK, PsbL, PsbM, PsbT, PsbX, Psb30/Ycf12, peripheral proteins PsbO, CyanoQ (PsbQ), PsbU, PsbV and a large number of cofactors. It forms dimeric complexes. The D1/D2 heterodimer binds P680, chlorophylls that are the primary electron donor of PSII, and subsequent electron acceptors. It shares a non-heme iron and each subunit binds pheophytin, quinone, additional chlorophylls, carotenoids and lipids. D1 provides most of the ligands for the Mn4-Ca-O5 cluster of the oxygen-evolving complex (OEC). There is also a Cl(-1) ion associated with D1 and D2, which is required for oxygen evolution. The PSII complex binds additional chlorophylls, carotenoids and specific lipids. is required as a cofactor. Post-translationally, tyr-161 forms a radical intermediate that is referred to as redox-active TyrZ, YZ or Y-Z. C-terminally processed by CtpA; processing is essential to allow assembly of the oxygen-evolving complex and thus photosynthetic growth.

The protein resides in the cell inner membrane. The enzyme catalyses 2 a plastoquinone + 4 hnu + 2 H2O = 2 a plastoquinol + O2. Photosystem II (PSII) is a light-driven water:plastoquinone oxidoreductase that uses light energy to abstract electrons from H(2)O, generating O(2) and a proton gradient subsequently used for ATP formation. It consists of a core antenna complex that captures photons, and an electron transfer chain that converts photonic excitation into a charge separation. The D1/D2 (PsbA/PsbD) reaction center heterodimer binds P680, the primary electron donor of PSII as well as several subsequent electron acceptors. The chain is Photosystem II protein D1 2 from Gloeobacter violaceus (strain ATCC 29082 / PCC 7421).